Consider the following 74-residue polypeptide: SPbeta prophage-derived uncharacterized HTH-type transcriptional regulator YopS (74 aa).

Residues isoleucine 11–leucine 66 enclose the HTH cro/C1-type domain. A DNA-binding region (H-T-H motif) is located at residues isoleucine 22–arginine 41.

The chain is SPbeta prophage-derived uncharacterized HTH-type transcriptional regulator YopS (yopS) from Bacillus subtilis (strain 168).